The following is a 721-amino-acid chain: MIYEGKAITVKALESGIVELNFDLKGESVNKFNRLTLNELRQAVDAIKADASVKGVIVSSGKDVFIVGADITEFVDNFKLPEAELVAGNLQANRIFSDFEDLGVPTVVAINGIALGGGLEMCLAADYRVISSSARIGLPEVKLGLYPGFGGTVRLPRIIGADNAIEWIASGKESSAEDALKVGAVDAVVAPEKLQAAALDLIQRAISGEFDYKAKRQPKLDKLKLNAIEQMMAFETAKGFVAGQAGPNYPAPVEAIKTIQKAANFGRDKALEIEAAGFVKMAKTSAAQSLIGLFLNDQELKKKAKGYDAVAKDVKQAAVLGAGIMGGGIAYQSAVKGTPILMKDIREEAIQLGLNEASKLLGGRLEKGRLTAAKMAEALNAIRPTLSYGDFGNVDLVVEAVVENPKVKQAVLAEVEANVGEHTILASNTSTISISLLAKALKRPENFVGMHFFNPVHMMPLVEVIRGEKSSEEAVATTVAYARKMGKNPIVVNDCPGFLVNRVLFPYFGGFARLVSAGVDFVRIDKVMEKFGWPMGPAYLMDVVGIDTGHHGRDVMAEGFPDRMKDDRRSVVDALYEAKRLGQKNGKGFYAYETDKKGKPKKVNDPAVLDVLKPIVYEQREVSDEDIINWMMIPLCLETVRCLEDGIVETAAEADMGLIYGIGFPPFRGGALRYIDSIGVAEFVALADQYAELGALYQPTAKLREMASKGQSFFGQASSEE.

The enoyl-CoA hydratase/isomerase stretch occupies residues 1–190; that stretch reads MIYEGKAITV…KVGAVDAVVA (190 aa). Aspartate 297 is a binding site for substrate. A 3-hydroxyacyl-CoA dehydrogenase region spans residues 312-721; that stretch reads KDVKQAAVLG…SFFGQASSEE (410 aa). NAD(+) is bound by residues methionine 325, aspartate 344, 401–403, lysine 408, and serine 430; that span reads VVE. The active-site For 3-hydroxyacyl-CoA dehydrogenase activity is the histidine 451. Residue asparagine 454 coordinates NAD(+). Positions 501 and 660 each coordinate substrate.

It in the N-terminal section; belongs to the enoyl-CoA hydratase/isomerase family. The protein in the C-terminal section; belongs to the 3-hydroxyacyl-CoA dehydrogenase family. Heterotetramer of two alpha chains (FadB) and two beta chains (FadA).

The enzyme catalyses a (3S)-3-hydroxyacyl-CoA + NAD(+) = a 3-oxoacyl-CoA + NADH + H(+). The catalysed reaction is a (3S)-3-hydroxyacyl-CoA = a (2E)-enoyl-CoA + H2O. It catalyses the reaction a 4-saturated-(3S)-3-hydroxyacyl-CoA = a (3E)-enoyl-CoA + H2O. It carries out the reaction (3S)-3-hydroxybutanoyl-CoA = (3R)-3-hydroxybutanoyl-CoA. The enzyme catalyses a (3Z)-enoyl-CoA = a 4-saturated (2E)-enoyl-CoA. The catalysed reaction is a (3E)-enoyl-CoA = a 4-saturated (2E)-enoyl-CoA. It participates in lipid metabolism; fatty acid beta-oxidation. Its function is as follows. Involved in the aerobic and anaerobic degradation of long-chain fatty acids via beta-oxidation cycle. Catalyzes the formation of 3-oxoacyl-CoA from enoyl-CoA via L-3-hydroxyacyl-CoA. It can also use D-3-hydroxyacyl-CoA and cis-3-enoyl-CoA as substrate. This Pseudomonas savastanoi pv. phaseolicola (strain 1448A / Race 6) (Pseudomonas syringae pv. phaseolicola (strain 1448A / Race 6)) protein is Fatty acid oxidation complex subunit alpha.